The chain runs to 143 residues: UPF0225 protein Reut_A0143 (143 aa).

The protein belongs to the UPF0225 family.

The protein is UPF0225 protein Reut_A0143 of Cupriavidus pinatubonensis (strain JMP 134 / LMG 1197) (Cupriavidus necator (strain JMP 134)).